A 289-amino-acid polypeptide reads, in one-letter code: 4-hydroxy-3-methylbut-2-enyl diphosphate reductase (289 aa).

A [4Fe-4S] cluster-binding site is contributed by cysteine 13. Histidine 42 and histidine 76 together coordinate (2E)-4-hydroxy-3-methylbut-2-enyl diphosphate. Residues histidine 42 and histidine 76 each coordinate dimethylallyl diphosphate. Isopentenyl diphosphate is bound by residues histidine 42 and histidine 76. [4Fe-4S] cluster is bound at residue cysteine 98. Histidine 130 lines the (2E)-4-hydroxy-3-methylbut-2-enyl diphosphate pocket. Residue histidine 130 participates in dimethylallyl diphosphate binding. Histidine 130 provides a ligand contact to isopentenyl diphosphate. The Proton donor role is filled by glutamate 132. Threonine 168 contacts (2E)-4-hydroxy-3-methylbut-2-enyl diphosphate. Cysteine 199 lines the [4Fe-4S] cluster pocket. Positions 227, 228, 229, and 272 each coordinate (2E)-4-hydroxy-3-methylbut-2-enyl diphosphate. Positions 227, 228, 229, and 272 each coordinate dimethylallyl diphosphate. Isopentenyl diphosphate is bound by residues serine 227, serine 228, asparagine 229, and serine 272.

It belongs to the IspH family. [4Fe-4S] cluster serves as cofactor.

The catalysed reaction is isopentenyl diphosphate + 2 oxidized [2Fe-2S]-[ferredoxin] + H2O = (2E)-4-hydroxy-3-methylbut-2-enyl diphosphate + 2 reduced [2Fe-2S]-[ferredoxin] + 2 H(+). The enzyme catalyses dimethylallyl diphosphate + 2 oxidized [2Fe-2S]-[ferredoxin] + H2O = (2E)-4-hydroxy-3-methylbut-2-enyl diphosphate + 2 reduced [2Fe-2S]-[ferredoxin] + 2 H(+). Its pathway is isoprenoid biosynthesis; dimethylallyl diphosphate biosynthesis; dimethylallyl diphosphate from (2E)-4-hydroxy-3-methylbutenyl diphosphate: step 1/1. It functions in the pathway isoprenoid biosynthesis; isopentenyl diphosphate biosynthesis via DXP pathway; isopentenyl diphosphate from 1-deoxy-D-xylulose 5-phosphate: step 6/6. In terms of biological role, catalyzes the conversion of 1-hydroxy-2-methyl-2-(E)-butenyl 4-diphosphate (HMBPP) into a mixture of isopentenyl diphosphate (IPP) and dimethylallyl diphosphate (DMAPP). Acts in the terminal step of the DOXP/MEP pathway for isoprenoid precursor biosynthesis. The protein is 4-hydroxy-3-methylbut-2-enyl diphosphate reductase of Porphyromonas gingivalis (strain ATCC BAA-308 / W83).